Reading from the N-terminus, the 688-residue chain is Alpha-1,4-glucan:maltose-1-phosphate maltosyltransferase (688 aa).

Alpha-maltose 1-phosphate is bound by residues lysine 289, glutamine 349, and aspartate 384. Residue aspartate 420 is the Nucleophile of the active site. Asparagine 421 lines the alpha-maltose 1-phosphate pocket. Catalysis depends on glutamate 449, which acts as the Proton donor. Residue 560–561 (KY) participates in alpha-maltose 1-phosphate binding.

Belongs to the glycosyl hydrolase 13 family. GlgE subfamily. In terms of assembly, homodimer.

The enzyme catalyses alpha-maltose 1-phosphate + [(1-&gt;4)-alpha-D-glucosyl](n) = [(1-&gt;4)-alpha-D-glucosyl](n+2) + phosphate. Its function is as follows. Maltosyltransferase that uses maltose 1-phosphate (M1P) as the sugar donor to elongate linear or branched alpha-(1-&gt;4)-glucans. Is involved in a branched alpha-glucan biosynthetic pathway from trehalose, together with TreS, Mak and GlgB. The protein is Alpha-1,4-glucan:maltose-1-phosphate maltosyltransferase of Rhodospirillum rubrum (strain ATCC 11170 / ATH 1.1.1 / DSM 467 / LMG 4362 / NCIMB 8255 / S1).